A 182-amino-acid chain; its full sequence is Adenine phosphoribosyltransferase (182 aa).

It belongs to the purine/pyrimidine phosphoribosyltransferase family. Homodimer.

It localises to the cytoplasm. It catalyses the reaction AMP + diphosphate = 5-phospho-alpha-D-ribose 1-diphosphate + adenine. It participates in purine metabolism; AMP biosynthesis via salvage pathway; AMP from adenine: step 1/1. Functionally, catalyzes a salvage reaction resulting in the formation of AMP, that is energically less costly than de novo synthesis. This chain is Adenine phosphoribosyltransferase, found in Bordetella avium (strain 197N).